A 105-amino-acid chain; its full sequence is Small ribosomal subunit protein eS10B (105 aa).

It belongs to the eukaryotic ribosomal protein eS10 family. As to quaternary structure, component of the small ribosomal subunit (SSU). Mature yeast ribosomes consist of a small (40S) and a large (60S) subunit. The 40S small subunit contains 1 molecule of ribosomal RNA (18S rRNA) and 33 different proteins (encoded by 57 genes). The large 60S subunit contains 3 rRNA molecules (25S, 5.8S and 5S rRNA) and 46 different proteins (encoded by 81 genes). eS10 interacts with GCN1 (via middle region); this interaction is direct and promotes GCN2 kinase activity. The N-terminus is not modified.

The protein localises to the cytoplasm. Functionally, component of the ribosome, a large ribonucleoprotein complex responsible for the synthesis of proteins in the cell. The small ribosomal subunit (SSU) binds messenger RNAs (mRNAs) and translates the encoded message by selecting cognate aminoacyl-transfer RNA (tRNA) molecules. The large subunit (LSU) contains the ribosomal catalytic site termed the peptidyl transferase center (PTC), which catalyzes the formation of peptide bonds, thereby polymerizing the amino acids delivered by tRNAs into a polypeptide chain. The nascent polypeptides leave the ribosome through a tunnel in the LSU and interact with protein factors that function in enzymatic processing, targeting, and the membrane insertion of nascent chains at the exit of the ribosomal tunnel. eS10 plays a role as a positive regulator of the GCN2 kinase activity by stimulating GCN1-mediated GCN2 activation. The protein is Small ribosomal subunit protein eS10B of Saccharomyces cerevisiae (strain ATCC 204508 / S288c) (Baker's yeast).